Reading from the N-terminus, the 307-residue chain is Small ribosomal subunit biogenesis GTPase RsgA (307 aa).

The region spanning Lys-80–Phe-237 is the CP-type G domain. GTP is bound by residues Asn-129–Asp-132 and Gly-180–Ser-188. Residues Cys-261, Cys-266, His-268, and Cys-274 each contribute to the Zn(2+) site.

This sequence belongs to the TRAFAC class YlqF/YawG GTPase family. RsgA subfamily. In terms of assembly, monomer. Associates with 30S ribosomal subunit, binds 16S rRNA. Zn(2+) serves as cofactor.

Its subcellular location is the cytoplasm. One of several proteins that assist in the late maturation steps of the functional core of the 30S ribosomal subunit. Helps release RbfA from mature subunits. May play a role in the assembly of ribosomal proteins into the subunit. Circularly permuted GTPase that catalyzes slow GTP hydrolysis, GTPase activity is stimulated by the 30S ribosomal subunit. The chain is Small ribosomal subunit biogenesis GTPase RsgA from Borrelia garinii subsp. bavariensis (strain ATCC BAA-2496 / DSM 23469 / PBi) (Borreliella bavariensis).